The primary structure comprises 509 residues: MTQFVGAIDQGTTSSRFIVFDRHGAILAVAQKEHRQIYPRPGWVEHDPLEILANTQEVIGAALARANLTAADLAAVGITNQRETSLLWDRETGRPLCNALVWMDTRTDELVQRYRRDGGQDRFRDRTGLPLATYFSALKLRWILDNVDGARAQAESGRALFGTIDSWLAWNLTGGPDGGVHLTDVTNASRTMLMDLATCRWDDDLLATFGIPRACLPRIVASSDLHGTIRTPPLDGARLAGILGDQQAALVGQACFAPGEAKNTYGTGSFLLMNTGTEPVRSKAGLLTTLAYRFGDEPPRYALEGAIAITGALVQWLRDNLGLFDSAPEIEALARSVPDNGDVYIVPAFSGLYAPYWDDSARGVIAGLTRFSNRGHIARAALEATAYQLCDVVAAMEADSGIRLATLKTDGGMVANELLMQFQADMLGAPVVRPRITETTALGAAYAAGLAVGYWSGTQELRDNWGVDATWRPTMPAELRAHHQRSWKKAIGKSLGWIDRPQAAADDVG.

Thr12 contacts ADP. The ATP site is built by Thr12, Thr13, and Ser14. Position 12 (Thr12) interacts with sn-glycerol 3-phosphate. Arg16 serves as a coordination point for ADP. Residues Arg82, Glu83, Tyr134, and Asp245 each coordinate sn-glycerol 3-phosphate. Residues Arg82, Glu83, Tyr134, Asp245, and Gln246 each contribute to the glycerol site. Positions 267 and 311 each coordinate ADP. 4 residues coordinate ATP: Thr267, Gly311, Gln315, and Gly412. 2 residues coordinate ADP: Gly412 and Asn416.

Belongs to the FGGY kinase family.

The enzyme catalyses glycerol + ATP = sn-glycerol 3-phosphate + ADP + H(+). It participates in polyol metabolism; glycerol degradation via glycerol kinase pathway; sn-glycerol 3-phosphate from glycerol: step 1/1. Inhibited by fructose 1,6-bisphosphate (FBP). Its function is as follows. Key enzyme in the regulation of glycerol uptake and metabolism. Catalyzes the phosphorylation of glycerol to yield sn-glycerol 3-phosphate. This Rhizorhabdus wittichii (strain DSM 6014 / CCUG 31198 / JCM 15750 / NBRC 105917 / EY 4224 / RW1) (Sphingomonas wittichii) protein is Glycerol kinase.